The following is a 339-amino-acid chain: MANTKKYFLESVSPLEYAQKKFQGNLRSVNWNLVDDEKDLEVWNRITQNFWLPEKIPVSNDIPSWKQLSKEWQDLITKTFTGLTLLDTIQATIGDIKQIDYALTDHEQVIYANFAFMVGVHARSYGTIFSTLCTSEQITEAHEWVVKTESLQKRAKALIPYYTGKDPLKSKVAAALMPGFLLYGGFYLPFYLSSRKQLPNTSDIIRLILRDKVIHNYYSGYKFQRKVEKMSKEKQAEMKRFVFDLMYELIELEKAYLKELYEGFGIVEDAIKFSIYNAGKFLQNLGYDSPFTEEETRIKPEIFAQLSARADENHDFFSGNGSSYVMGISEETEDKDWDF.

Residues Asp-87 and His-121 each coordinate Fe cation. Tyr-125 is an active-site residue. His-215 contributes to the Fe cation binding site.

It belongs to the ribonucleoside diphosphate reductase small chain family. As to quaternary structure, tetramer of two alpha and two beta subunits. The cofactor is Fe cation.

The enzyme catalyses a 2'-deoxyribonucleoside 5'-diphosphate + [thioredoxin]-disulfide + H2O = a ribonucleoside 5'-diphosphate + [thioredoxin]-dithiol. Its function is as follows. Provides the precursors necessary for DNA synthesis. Catalyzes the biosynthesis of deoxyribonucleotides from the corresponding ribonucleotides. This chain is Ribonucleoside-diphosphate reductase subunit beta (nrdF), found in Mycoplasma pneumoniae (strain ATCC 29342 / M129 / Subtype 1) (Mycoplasmoides pneumoniae).